A 475-amino-acid chain; its full sequence is Equilibrative nucleoside transporter 3 (475 aa).

Residues 1 to 24 are disordered; sequence MAVVSEDDFQHSSNSTYRTTSSSL. Residues 1-53 are Cytoplasmic-facing; it reads MAVVSEDDFQHSSNSTYRTTSSSLRADQEALLEKLLDRPPPGLQRPEDRFCGT. Residues 12–23 are compositionally biased toward low complexity; sequence SSNSTYRTTSSS. Serine 21 and serine 23 each carry phosphoserine. The short motif at 31-32 is the Dileucine internalization motif element; sequence LL. The chain crosses the membrane as a helical span at residues 54-74; that stretch reads YIIFFSLGIGSLLPWNFFITA. Over 75–105 the chain is Extracellular; sequence KEYWMFKLRNSSSPATGEDPEGSDILNYFES. The N-linked (GlcNAc...) asparagine glycan is linked to asparagine 84. The chain crosses the membrane as a helical span at residues 106–126; sequence YLAVASTVPSMLCLVANFLLV. Over 127–134 the chain is Cytoplasmic; it reads NRVAVHIR. A helical membrane pass occupies residues 135 to 155; it reads VLASLTVILAIFMVITALVKV. Over 156–162 the chain is Extracellular; that stretch reads DTSSWTR. A helical membrane pass occupies residues 163–183; sequence GFFAVTIVCMVILSGASTVFS. Residues 184-199 are Cytoplasmic-facing; sequence SSIYGMTGSFPMRNSQ. Residues 200-220 form a helical membrane-spanning segment; that stretch reads ALISGGAMGGTVSAVASLVDL. Residues 221-230 are Extracellular-facing; that stretch reads AASSDVRNSA. A helical transmembrane segment spans residues 231-251; sequence LAFFLTATVFLVLCMGLYLLL. The Cytoplasmic segment spans residues 252–305; that stretch reads SRLEYARYYMRPVLAAHVFSGEEELPQDSLSAPSVASRFIDSHTPPLRPILKKT. The helical transmembrane segment at 306–326 threads the bilayer; the sequence is ASLGFCVTYVFFITSLIYPAI. Topologically, residues 327 to 337 are extracellular; the sequence is CTNIESLNKGS. The helical transmembrane segment at 338–358 threads the bilayer; that stretch reads GSLWTTKFFIPLTTFLLYNFA. The Cytoplasmic segment spans residues 359-377; that stretch reads DLCGRQLTAWIQVPGPNSK. A helical membrane pass occupies residues 378–398; that stretch reads ALPGFVLLRTCLIPLFVLCNY. At 399–415 the chain is on the extracellular side; sequence QPRVHLKTVVFQSDVYP. Residues 416 to 436 traverse the membrane as a helical segment; sequence ALLSSLLGLSNGYLSTLALLY. Over 437-454 the chain is Cytoplasmic; sequence GPKIVPRELAEATGVVMS. The helical transmembrane segment at 455-475 threads the bilayer; that stretch reads FYVCLGLTLGSACSTLLVHLI.

This sequence belongs to the SLC29A/ENT transporter (TC 2.A.57) family. As to expression, widely expressed in both adult and fetal tissues. Highest levels in placenta, uterus, ovary, spleen, lymph node and bone marrow. Expressed in liver. Lowest levels in brain and heart. Expressed in macrophages.

The protein resides in the lysosome membrane. Its subcellular location is the late endosome membrane. It localises to the mitochondrion membrane. The protein localises to the cell membrane. The catalysed reaction is adenosine(in) = adenosine(out). The enzyme catalyses guanosine(in) = guanosine(out). It carries out the reaction inosine(in) = inosine(out). It catalyses the reaction uridine(out) = uridine(in). The catalysed reaction is cytidine(in) = cytidine(out). The enzyme catalyses thymidine(in) = thymidine(out). It carries out the reaction 2'-deoxyadenosine(in) = 2'-deoxyadenosine(out). It catalyses the reaction 2'-deoxycytidine(in) = 2'-deoxycytidine(out). The catalysed reaction is guanine(out) = guanine(in). The enzyme catalyses uracil(in) = uracil(out). It carries out the reaction (R)-noradrenaline(out) = (R)-noradrenaline(in). It catalyses the reaction dopamine(out) = dopamine(in). The catalysed reaction is serotonin(out) = serotonin(in). The enzyme catalyses tyramine(in) = tyramine(out). It carries out the reaction ATP(in) = ATP(out). Functionally, uniporter that mediates the facilitative transport of nucleoside across lysosomal and mitochondrial membranes. Functions as a non-electrogenic Na(+)-independent transporter. Substrate transport is pH-dependent and enhanced under acidic condition, probably reflecting the location of the transporter in acidic intracellular compartments. Proton is not a cotransporting ion but most likely change the ionization state of the transporter which dictates transport-permissible/impermissible conformation for nucleoside translocation. May direct the nucleoside transport from lysosomes to cytosol or cytosol to mitochondria to facilitate the fundamental function of salvage synthesis of nucleic acids. Involved in the transport of nucleosides (adenosine, guanosine, uridine, thymidine, cytidine and inosine) and deoxynucleosides (deoxyadenosine, deoxycytidine). Also mediates transport of purine nucleobases (adenine, guanine) and pyrimidine nucleobases (uracil). Also able to transport monoamine neurotransmitters dopamine, serotonin, noradrenaline and tyramine. Capable of transporting ATP. Mediates nucleoside export from lysosomes in macrophages, which regulates macrophage functions and numbers. This is Equilibrative nucleoside transporter 3 from Homo sapiens (Human).